Consider the following 426-residue polypeptide: Gamma-glutamyl phosphate reductase (426 aa).

Belongs to the gamma-glutamyl phosphate reductase family.

It localises to the cytoplasm. The enzyme catalyses L-glutamate 5-semialdehyde + phosphate + NADP(+) = L-glutamyl 5-phosphate + NADPH + H(+). The protein operates within amino-acid biosynthesis; L-proline biosynthesis; L-glutamate 5-semialdehyde from L-glutamate: step 2/2. Functionally, catalyzes the NADPH-dependent reduction of L-glutamate 5-phosphate into L-glutamate 5-semialdehyde and phosphate. The product spontaneously undergoes cyclization to form 1-pyrroline-5-carboxylate. The sequence is that of Gamma-glutamyl phosphate reductase from Cupriavidus necator (strain ATCC 17699 / DSM 428 / KCTC 22496 / NCIMB 10442 / H16 / Stanier 337) (Ralstonia eutropha).